The following is a 205-amino-acid chain: Superoxide dismutase [Fe] (205 aa).

Residues histidine 33, histidine 81, aspartate 167, and histidine 171 each contribute to the Fe cation site.

This sequence belongs to the iron/manganese superoxide dismutase family. As to quaternary structure, homotetramer. It depends on Fe cation as a cofactor.

It catalyses the reaction 2 superoxide + 2 H(+) = H2O2 + O2. Destroys superoxide anion radicals which are normally produced within the cells and which are toxic to biological systems. The sequence is that of Superoxide dismutase [Fe] (sod) from Methanothermobacter thermautotrophicus (strain ATCC 29096 / DSM 1053 / JCM 10044 / NBRC 100330 / Delta H) (Methanobacterium thermoautotrophicum).